The sequence spans 422 residues: Histidine--tRNA ligase (422 aa).

The protein belongs to the class-II aminoacyl-tRNA synthetase family. As to quaternary structure, homodimer.

The protein resides in the cytoplasm. The catalysed reaction is tRNA(His) + L-histidine + ATP = L-histidyl-tRNA(His) + AMP + diphosphate + H(+). This is Histidine--tRNA ligase from Prosthecochloris aestuarii (strain DSM 271 / SK 413).